Here is a 545-residue protein sequence, read N- to C-terminus: RAN GTPase-activating protein 2 (545 aa).

A WPP region spans residues 1–116 (MADILDSRPH…VAARELISED (116 aa)). LRR repeat units lie at residues 213–236 (GSIL…AFGA), 241–264 (LSSL…AVSE), 269–296 (TENL…VVKR), 325–348 (CTHM…SLSK), 353–380 (FKHM…ALKE), 382–405 (ASPI…AIAA), 410–433 (KQDL…QIAN), 439–462 (HSKL…ALAH), and 467–494 (KEAF…IFKK). The tract at residues 496-545 (PELLGALDENDPDGEEDDDDEEDEEDEENEGNGNGELESKLKNLEVNQED) is disordered. The segment covering 503–525 (DENDPDGEEDDDDEEDEEDEENE) has biased composition (acidic residues).

It belongs to the RNA1 family. Homodimer. Interacts with WIP1 and WIP2 through its WPP domain. Component of Ran complexes at least composed of WIT1 or WIT2, RANGAP1 or RANGAP2, and WIP1 or WIP2 or WIP3. Interacts with WIT1.

The protein localises to the cytoplasm. Its subcellular location is the nucleus membrane. It localises to the cytoskeleton. It is found in the spindle. The protein resides in the phragmoplast. In terms of biological role, GTPase activator for the nuclear Ras-related regulatory protein Ran, converting it to the putatively inactive GDP-bound state. This chain is RAN GTPase-activating protein 2 (RANGAP2), found in Arabidopsis thaliana (Mouse-ear cress).